A 581-amino-acid chain; its full sequence is MITRLSHLFLRTLRDDPSDAEVASHKLLVRAGYVRRIAPGVYSWLPLGLRVLREVERVVREEMNAIGGQEILLPALLPRDPYEASNRWTEYGPNLFRLKDRKGNDYMLGPTHEELFALTVKGEYNSYKDFPVTLYQVQTKYRDEERPRAGILRGREFLMKDSYSFDLSDEGLTESYQAHRGAYEKIFTRLGVKYVIVSATSGAMGGSASEEFLAESEIGEDTYVRCLESGYAANVEAVKTVVPDSIPFDGLPEAKVYDTANTPTIDTLVDWANGADLGRTITAADTLKNIMVKTRLPGGEWELLGIGIPGDREVDEKRLEASLEPAEFVMITETDFKNNPFLAKGYIGPKALQANGVRYLVDPRVVDGTSWITGADEDGKHVVGLVAGRDFTPDGTIEAAEVRDGDASPDGAGTLVSARGIEIGHVFQLGRKYTDVFTVDVLAENGKPVRPTMGSYGVGVSRLVAVIAEQHHDEKGLRWPAEVSPADVYLVIANKDETAREGAEGLAAQLDRAGLEVILDDRKASPGVKFKDSELIGVPLIVVVGRGWADGKVEIRDRFTGESREIDADSAIEAIISAVRG.

It belongs to the class-II aminoacyl-tRNA synthetase family. ProS type 1 subfamily. Homodimer.

Its subcellular location is the cytoplasm. The catalysed reaction is tRNA(Pro) + L-proline + ATP = L-prolyl-tRNA(Pro) + AMP + diphosphate. Functionally, catalyzes the attachment of proline to tRNA(Pro) in a two-step reaction: proline is first activated by ATP to form Pro-AMP and then transferred to the acceptor end of tRNA(Pro). As ProRS can inadvertently accommodate and process non-cognate amino acids such as alanine and cysteine, to avoid such errors it has two additional distinct editing activities against alanine. One activity is designated as 'pretransfer' editing and involves the tRNA(Pro)-independent hydrolysis of activated Ala-AMP. The other activity is designated 'posttransfer' editing and involves deacylation of mischarged Ala-tRNA(Pro). The misacylated Cys-tRNA(Pro) is not edited by ProRS. This Rhodococcus erythropolis (strain PR4 / NBRC 100887) protein is Proline--tRNA ligase.